The sequence spans 106 residues: Large ribosomal subunit protein bL21 (106 aa).

This sequence belongs to the bacterial ribosomal protein bL21 family. As to quaternary structure, part of the 50S ribosomal subunit. Contacts protein L20.

Its function is as follows. This protein binds to 23S rRNA in the presence of protein L20. In Thermosipho africanus (strain TCF52B), this protein is Large ribosomal subunit protein bL21.